The following is a 591-amino-acid chain: MKKISLPKIGIRPVIDGRRMGVRESLEEQTMNMAKATAALLTEKLRHACGATVECVISDTCIAGMAEAAACEEKFSSQNVGLTITVTPCWCYGSETIDMDPTRPKAIWGFNGTERPGAVYLAAALAAHSQKGIPAFSIYGHDVQDADDTSIPADVEEKLLRFARAGLAVASMKGKSYLSLGGVSMGIAGSIVDHNFFESWLGMKVQAVDMTELRRRIDQKIYDEAELEMALAWADKNFRYGEDENNKQYQRNAEQSRAVLRESLLMAMCIRDMMQGNSKLADIGRVEESLGYNAIAAGFQGQRHWTDQYPNGDTAEAILNSSFDWNGVRKPFVVATENDSLNGVAMLMGHQLTGTAQVFADVRTYWSPEAIERVTGHKLDGLAEHGIIHLINSGSAALDGSCKQRDSEGNPTMKPHWEISQQEADACLAATEWCPAIHEYFRGGGYSSRFLTEGGVPFTMTRVNIIKGLGPVLQIAEGWSVELPKDVHDILNKRTNSTWPTTWFAPRLTGKGPFTDVYSVMANWGANHGVLTIGHVGADFITLASMLRIPVCMHNVEETKVYRPSAWAAHGMDIEGQDYRACQNYGPLYKR.

Residues glutamate 337 and aspartate 361 each act as proton acceptor in the active site. Mn(2+)-binding residues include glutamate 337, aspartate 361, and histidine 528.

This sequence belongs to the L-fucose isomerase family. In terms of assembly, homohexamer. Requires Mn(2+) as cofactor.

The protein resides in the cytoplasm. The enzyme catalyses L-fucose = L-fuculose. Its pathway is carbohydrate degradation; L-fucose degradation; L-lactaldehyde and glycerone phosphate from L-fucose: step 1/3. Converts the aldose L-fucose into the corresponding ketose L-fuculose. In Escherichia coli O6:H1 (strain CFT073 / ATCC 700928 / UPEC), this protein is L-fucose isomerase.